Reading from the N-terminus, the 359-residue chain is Methylthioribose-1-phosphate isomerase (359 aa).

Residues 52-54 (RGA), R90, and Q200 contribute to the substrate site. Residue D241 is the Proton donor of the active site. 251–252 (NK) is a substrate binding site.

Belongs to the eIF-2B alpha/beta/delta subunits family. MtnA subfamily.

It carries out the reaction 5-(methylsulfanyl)-alpha-D-ribose 1-phosphate = 5-(methylsulfanyl)-D-ribulose 1-phosphate. It functions in the pathway amino-acid biosynthesis; L-methionine biosynthesis via salvage pathway; L-methionine from S-methyl-5-thio-alpha-D-ribose 1-phosphate: step 1/6. Functionally, catalyzes the interconversion of methylthioribose-1-phosphate (MTR-1-P) into methylthioribulose-1-phosphate (MTRu-1-P). The chain is Methylthioribose-1-phosphate isomerase from Sulfurimonas denitrificans (strain ATCC 33889 / DSM 1251) (Thiomicrospira denitrificans (strain ATCC 33889 / DSM 1251)).